The sequence spans 267 residues: Ribosyldihydronicotinamide dehydrogenase-like protein traD (267 aa).

FAD-binding positions include histidine 9, 15 to 16 (LN), and 100 to 103 (LWWF). 122-124 (GHG) provides a ligand contact to substrate. FAD contacts are provided by residues 152-155 (TLGG) and tyrosine 160.

The protein belongs to the NAD(P)H dehydrogenase (quinone) family. Homodimer. The cofactor is FAD.

It functions in the pathway secondary metabolite biosynthesis. Functionally, ribosyldihydronicotinamide dehydrogenase-like protein; part of the tra gene cluster that produces terrestric acid. The clavatol biosynthesis cluster cla and the terrestric acid cluster tra are both involved in the production of peniphenones and penilactones. The non-reducing PKS claF is responsible for the formation of clavatol from successive condensations of 3 malonyl-CoA units, presumably with a simple acetyl-CoA starter unit, and 2 methylation steps. The esterase claE probably collaborates with claF by catalyzing the hydrolysis of ACP-bound acyl intermediates to free the ACP from stalled intermediates. The clavatol oxidase claD then converts clavatol to hydroxyclavatol. Spontaneous dehydration of hydroxyclavatol leads to the accumulation of the highly active ortho-quinone methide. On the other hand, the PKS-NRPS hybrid traA is involved in the formation of crustosic acid, with the help of traB and traD. The polyketide synthase module (PKS) of traA is responsible for the synthesis of the polyketide backbone via the condensation of an acetyl-CoA starter unit with 3 malonyl-CoA units. The downstream nonribosomal peptide synthetase (NRPS) module then amidates the carboxyl end of the polyketide with L-malic acid. Because traA lacks a designated enoylreductase (ER) domain, the required activity is provided the enoyl reductase traG. Crustosic acid undergoes decarboxylation and isomerization to the terrestric acid, catalyzed by the 2-oxoglutarate-dependent dioxygenase traH. Both acids are further converted to the 2 gamma-butyrolactones (R)-5-methyltetronic acid and (S)-5-carboxylmethyltetronic acid, with involvement of the cytochrome P450 monooxygenase claJ. Spontaneous addition of the methide to these gamma-butyrolactones leads to peniphenone D and penilactone D, which undergo again stereospecific attacking by methide to give penilactones A and B. This Penicillium crustosum (Blue mold fungus) protein is Ribosyldihydronicotinamide dehydrogenase-like protein traD.